We begin with the raw amino-acid sequence, 63 residues long: Anionic peptide NDBP7 (63 aa).

Positions 1–20 are cleaved as a signal peptide; it reads MISRFCLLFLLVFVVSKIQA.

The protein belongs to the non-disulfide-bridged peptide (NDBP) superfamily. Long chain multifunctional peptide (group 2) family. As to expression, expressed by the venom gland.

Its subcellular location is the secreted. In Lychas mucronatus (Chinese swimming scorpion), this protein is Anionic peptide NDBP7.